The sequence spans 184 residues: Elongation factor P (184 aa).

It belongs to the elongation factor P family.

The protein resides in the cytoplasm. Its pathway is protein biosynthesis; polypeptide chain elongation. In terms of biological role, involved in peptide bond synthesis. Stimulates efficient translation and peptide-bond synthesis on native or reconstituted 70S ribosomes in vitro. Probably functions indirectly by altering the affinity of the ribosome for aminoacyl-tRNA, thus increasing their reactivity as acceptors for peptidyl transferase. In Verminephrobacter eiseniae (strain EF01-2), this protein is Elongation factor P.